A 450-amino-acid polypeptide reads, in one-letter code: Flavin-containing monooxygenase FMO GS-OX-like 3 (450 aa).

FAD is bound at residue 17-22 (GAGPAG). 215–220 (GNSSSA) is a binding site for NADP(+).

Belongs to the FMO family. The cofactor is FAD.

Catalyzes the conversion of methylthioalkyl glucosinolates of any chain length into methylsulfinylalkyl glucosinolates. The sequence is that of Flavin-containing monooxygenase FMO GS-OX-like 3 from Arabidopsis thaliana (Mouse-ear cress).